The primary structure comprises 143 residues: uncharacterized protein (143 aa).

This is an uncharacterized protein from Mycobacterium tuberculosis (strain CDC 1551 / Oshkosh).